The sequence spans 482 residues: Matrix metalloproteinase-20 (482 aa).

An N-terminal signal peptide occupies residues 1–21 (MKVLPASGLAVLVTALKFATA). Residues 22–106 (DPNLLAATPR…PRCGVPDVAN (85 aa)) constitute a propeptide that is removed on maturation. Residues 97–104 (PRCGVPDV) carry the Cysteine switch motif. A Zn(2+)-binding site is contributed by cysteine 99. The Ca(2+) site is built by glutamate 163, alanine 164, and aspartate 165. Positions 175 and 177 each coordinate Zn(2+). Ca(2+) contacts are provided by aspartate 182, glycine 183, arginine 185, and threonine 187. Residue histidine 190 participates in Zn(2+) binding. Glutamate 196, glycine 197, glycine 199, and aspartate 201 together coordinate Ca(2+). Residue histidine 203 coordinates Zn(2+). Ca(2+) is bound by residues aspartate 205 and glutamate 208. Histidine 225 lines the Zn(2+) pocket. Glutamate 226 is an active-site residue. 2 residues coordinate Zn(2+): histidine 229 and histidine 235. Hemopexin repeat units lie at residues 292 to 342 (PDLC…FPQL), 343 to 388 (MSNV…GFPR), 390 to 438 (VQRI…FSGV), and 439 to 482 (SGHI…WIGC). A disulfide bond links cysteine 295 and cysteine 482.

This sequence belongs to the peptidase M10A family. Requires Zn(2+) as cofactor. The cofactor is Ca(2+). Autoactivates at least at the 106-Asn-|-Tyr-107 site. As to expression, expressed in the enamel organ.

It localises to the secreted. The protein localises to the extracellular space. It is found in the extracellular matrix. In terms of biological role, degrades amelogenin, the major protein component of the enamel matrix and two of the macromolecules characterizing the cartilage extracellular matrix: aggrecan and the cartilage oligomeric matrix protein (COMP). May play a central role in tooth enamel formation. Cleaves aggrecan at the '360-Asn-|-Phe-361' site. This is Matrix metalloproteinase-20 (Mmp20) from Mus musculus (Mouse).